The chain runs to 159 residues: Cytochrome c-type biogenesis protein CcmE (159 aa).

Residues 1 to 8 (MNIRRKNR) are Cytoplasmic-facing. Residues 9-29 (LWIACAVLAGLALTIGLVLYA) traverse the membrane as a helical; Signal-anchor for type II membrane protein segment. At 30–159 (LRSNIDLFYT…PASVYKDPAS (130 aa)) the chain is on the periplasmic side. Heme is bound by residues H130 and Y134. Residues 132 to 147 (ENYTPPEVEKAMEANH) are compositionally biased toward basic and acidic residues. The segment at 132–159 (ENYTPPEVEKAMEANHRRPASVYKDPAS) is disordered.

The protein belongs to the CcmE/CycJ family.

It is found in the cell inner membrane. Its function is as follows. Heme chaperone required for the biogenesis of c-type cytochromes. Transiently binds heme delivered by CcmC and transfers the heme to apo-cytochromes in a process facilitated by CcmF and CcmH. This Shigella sonnei (strain Ss046) protein is Cytochrome c-type biogenesis protein CcmE.